Consider the following 104-residue polypeptide: MIVNNTHVLTLPLYTTTTCHTHPHLYTDFTYAHGCYSIYHLKLTLLSDSTSLHGPSLTESVPNALTSLCTALASAVYTLCHLPITPIIIHILISISHSAVPNIV.

This is an uncharacterized protein from Saccharomyces cerevisiae (strain ATCC 204508 / S288c) (Baker's yeast).